A 550-amino-acid chain; its full sequence is Arginine--tRNA ligase (550 aa).

The 'HIGH' region motif lies at Ala130–Gly140.

This sequence belongs to the class-I aminoacyl-tRNA synthetase family. In terms of assembly, monomer.

The protein resides in the cytoplasm. It catalyses the reaction tRNA(Arg) + L-arginine + ATP = L-arginyl-tRNA(Arg) + AMP + diphosphate. In Rhodococcus jostii (strain RHA1), this protein is Arginine--tRNA ligase.